Reading from the N-terminus, the 232-residue chain is Orotidine 5'-phosphate decarboxylase (232 aa).

Residues D12, K34, 61-70 (DMKLLDIDNT), T116, R177, Q186, G206, and R207 contribute to the substrate site. K63 acts as the Proton donor in catalysis.

This sequence belongs to the OMP decarboxylase family. Type 1 subfamily. Homodimer.

The enzyme catalyses orotidine 5'-phosphate + H(+) = UMP + CO2. It functions in the pathway pyrimidine metabolism; UMP biosynthesis via de novo pathway; UMP from orotate: step 2/2. In terms of biological role, catalyzes the decarboxylation of orotidine 5'-monophosphate (OMP) to uridine 5'-monophosphate (UMP). In Sinorhizobium medicae (strain WSM419) (Ensifer medicae), this protein is Orotidine 5'-phosphate decarboxylase.